Consider the following 172-residue polypeptide: uncharacterized protein (172 aa).

It belongs to the flavoredoxin family. The cofactor is FMN.

This is an uncharacterized protein from Pyrococcus horikoshii (strain ATCC 700860 / DSM 12428 / JCM 9974 / NBRC 100139 / OT-3).